The chain runs to 170 residues: RNA pyrophosphohydrolase (170 aa).

Residues 6 to 149 (GFRPNVGIVI…KRDVYRRALK (144 aa)) enclose the Nudix hydrolase domain. Positions 38-59 (GGIDDGETPEQAMYRELYEEVG) match the Nudix box motif.

The protein belongs to the Nudix hydrolase family. RppH subfamily. A divalent metal cation is required as a cofactor.

Accelerates the degradation of transcripts by removing pyrophosphate from the 5'-end of triphosphorylated RNA, leading to a more labile monophosphorylated state that can stimulate subsequent ribonuclease cleavage. The sequence is that of RNA pyrophosphohydrolase from Aliivibrio fischeri (strain ATCC 700601 / ES114) (Vibrio fischeri).